A 51-amino-acid chain; its full sequence is MREKIRLVSSAKTGHFYTTTKNKKEMPNKMEIKKYDPVVRKHVMYKEAKIK.

Belongs to the bacterial ribosomal protein bL33 family.

This is Large ribosomal subunit protein bL33 from Francisella tularensis subsp. tularensis (strain FSC 198).